The sequence spans 239 residues: Small ribosomal subunit protein uS2 (239 aa).

This sequence belongs to the universal ribosomal protein uS2 family.

The protein is Small ribosomal subunit protein uS2 of Parasynechococcus marenigrum (strain WH8102).